A 35-amino-acid chain; its full sequence is uncharacterized protein (35 aa).

The helical transmembrane segment at 10 to 30 (LMITASFFAIFIIIVVSVLLL) threads the bilayer.

The protein localises to the membrane. This is an uncharacterized protein from Salmonella typhimurium (strain LT2 / SGSC1412 / ATCC 700720).